A 171-amino-acid chain; its full sequence is KRAB domain-containing protein 4 (171 aa).

The 72-residue stretch at 8-79 (LTFKDVFVDF…DGGTPVRTCA (72 aa)) folds into the KRAB domain.

In terms of tissue distribution, expressed in brain, ovary, testis, prostate, tonsil, heart, bone marrow, colon, breast and kidney.

The chain is KRAB domain-containing protein 4 (KRBOX4) from Homo sapiens (Human).